Reading from the N-terminus, the 471-residue chain is Putative metabolite transport protein YncC (471 aa).

The next 12 helical transmembrane spans lie at 13–33 (LIMI…GVIN), 50–70 (VTEG…ALLC), 88–108 (FLFF…IMAV), 111–131 (FLLG…LAEM), 146–166 (LMIV…GVTM), 175–195 (YMLV…LKVP), 256–276 (LLWI…NSIM), 295–315 (IANI…IWLV), 323–343 (ILLI…IFSI), 358–378 (LTVL…WLVI), 393–413 (ISVF…PILL), and 416–436 (VGLS…IGFV).

It belongs to the major facilitator superfamily. Sugar transporter (TC 2.A.1.1) family.

The protein resides in the cell membrane. This chain is Putative metabolite transport protein YncC (yncC), found in Bacillus subtilis (strain 168).